Reading from the N-terminus, the 272-residue chain is Small ribosomal subunit protein mS23 (272 aa).

A disordered region spans residues 233–272; it reads KENASKAAGDASAVSSEKQVEDDVVNFDESTDADQEVLHF. The span at 252–272 shows a compositional bias: acidic residues; the sequence is VEDDVVNFDESTDADQEVLHF.

The protein belongs to the mitochondrion-specific ribosomal protein mS23 family. As to quaternary structure, component of the mitochondrial small ribosomal subunit.

The protein localises to the mitochondrion. The chain is Small ribosomal subunit protein mS23 (RSM25) from Candida glabrata (strain ATCC 2001 / BCRC 20586 / JCM 3761 / NBRC 0622 / NRRL Y-65 / CBS 138) (Yeast).